Consider the following 156-residue polypeptide: Lipoprotein signal peptidase (156 aa).

The next 3 helical transmembrane spans lie at 37–57 (VIPGFFNLVHVVNKGAAFGFL), 68–88 (FFVVVTIIALGAIGMLLKSAE), and 95–115 (ILGLGFVLGGAIGNLIDRILY). Residues Asp-120 and Asp-138 contribute to the active site. The helical transmembrane segment at 133-153 (AFNVADIAICLGAFAMIVSFY) threads the bilayer.

This sequence belongs to the peptidase A8 family.

The protein resides in the cell inner membrane. The catalysed reaction is Release of signal peptides from bacterial membrane prolipoproteins. Hydrolyzes -Xaa-Yaa-Zaa-|-(S,diacylglyceryl)Cys-, in which Xaa is hydrophobic (preferably Leu), and Yaa (Ala or Ser) and Zaa (Gly or Ala) have small, neutral side chains.. Its pathway is protein modification; lipoprotein biosynthesis (signal peptide cleavage). In terms of biological role, this protein specifically catalyzes the removal of signal peptides from prolipoproteins. The sequence is that of Lipoprotein signal peptidase from Maridesulfovibrio salexigens (strain ATCC 14822 / DSM 2638 / NCIMB 8403 / VKM B-1763) (Desulfovibrio salexigens).